Reading from the N-terminus, the 317-residue chain is L-lactate dehydrogenase (317 aa).

NAD(+) is bound by residues V17, D38, K43, Y69, and 83 to 84; that span reads GA. Residues Q86 and R92 each coordinate substrate. NAD(+) contacts are provided by residues S105, 122–124, and S147; that span reads ATN. 124-127 contributes to the substrate binding site; that stretch reads NPVD. 152 to 155 lines the substrate pocket; sequence DTAR. Beta-D-fructose 1,6-bisphosphate-binding residues include R157 and H172. H179 acts as the Proton acceptor in catalysis. Y224 bears the Phosphotyrosine mark. Substrate is bound at residue T233.

It belongs to the LDH/MDH superfamily. LDH family. Homotetramer.

The protein localises to the cytoplasm. The enzyme catalyses (S)-lactate + NAD(+) = pyruvate + NADH + H(+). It participates in fermentation; pyruvate fermentation to lactate; (S)-lactate from pyruvate: step 1/1. With respect to regulation, allosterically activated by fructose 1,6-bisphosphate (FBP). Functionally, catalyzes the conversion of lactate to pyruvate. The chain is L-lactate dehydrogenase from Geobacillus kaustophilus (strain HTA426).